We begin with the raw amino-acid sequence, 63 residues long: Toxin Cn11 (63 aa).

Positions Arg2–Cys63 constitute an LCN-type CS-alpha/beta domain. Disulfide bonds link Cys12/Cys63, Cys16/Cys37, Cys23/Cys44, and Cys27/Cys46.

The protein belongs to the long (4 C-C) scorpion toxin superfamily. Sodium channel inhibitor family. As to expression, expressed by the venom gland.

The protein resides in the secreted. First blocker of sodium channels (Nav) found in scorpions. Is lethal to crustaceans (Cambarellus montezumae), less toxic to insects (crickets) and non-toxic to mammals (mice) at the doses assayed. In Centruroides noxius (Mexican scorpion), this protein is Toxin Cn11.